Reading from the N-terminus, the 394-residue chain is Elongation factor Tu (394 aa).

The region spanning 10-204 is the tr-type G domain; the sequence is KPHVNVGTIG…HLDTYIPEPE (195 aa). The segment at 19 to 26 is G1; that stretch reads GHVDHGKT. 19 to 26 contributes to the GTP binding site; the sequence is GHVDHGKT. Position 26 (Thr-26) interacts with Mg(2+). The G2 stretch occupies residues 60 to 64; that stretch reads GITIN. The segment at 81-84 is G3; that stretch reads DCPG. Residues 81 to 85 and 136 to 139 contribute to the GTP site; these read DCPGH and NKCD. The segment at 136–139 is G4; sequence NKCD. Residues 174 to 176 are G5; that stretch reads SAL.

The protein belongs to the TRAFAC class translation factor GTPase superfamily. Classic translation factor GTPase family. EF-Tu/EF-1A subfamily. Monomer.

It localises to the cytoplasm. It catalyses the reaction GTP + H2O = GDP + phosphate + H(+). Its function is as follows. GTP hydrolase that promotes the GTP-dependent binding of aminoacyl-tRNA to the A-site of ribosomes during protein biosynthesis. In Klebsiella pneumoniae subsp. pneumoniae (strain ATCC 700721 / MGH 78578), this protein is Elongation factor Tu.